We begin with the raw amino-acid sequence, 189 residues long: MPQKQLILASTSKYRQELLSRLAYSYSAQAPLVDEEKEKDPSLAPQALAEKLADLKAASLKAADKVVIGGDQLVSFEGRIIGKAHTPERAIEQLMSMQGKTHDLITAICVYDGDKKIAYTDITRMHMKKMTRAQIERYVQLDNPIDCAGSYKIEKHGIMLFDKIESQDFTAIQGLPLIELGKILENANL.

The active-site Proton acceptor is D71.

It belongs to the Maf family. YceF subfamily. It depends on a divalent metal cation as a cofactor.

The protein resides in the cytoplasm. It carries out the reaction N(7)-methyl-GTP + H2O = N(7)-methyl-GMP + diphosphate + H(+). Its function is as follows. Nucleoside triphosphate pyrophosphatase that hydrolyzes 7-methyl-GTP (m(7)GTP). May have a dual role in cell division arrest and in preventing the incorporation of modified nucleotides into cellular nucleic acids. The polypeptide is 7-methyl-GTP pyrophosphatase (Bdellovibrio bacteriovorus (strain ATCC 15356 / DSM 50701 / NCIMB 9529 / HD100)).